Consider the following 271-residue polypeptide: Sedoheptulose 1,7-bisphosphatase (271 aa).

Arg-12 is a substrate binding site. The Tele-phosphohistidine intermediate role is filled by His-13. Residues 24–25 (YT), Arg-69, 99–102 (EWEY), Arg-181, and His-244 each bind substrate. Glu-99 serves as the catalytic Proton donor/acceptor.

This sequence belongs to the phosphoglycerate mutase family. SHB17 subfamily. In terms of assembly, homodimer.

The protein localises to the cytoplasm. It is found in the nucleus. It catalyses the reaction D-sedoheptulose 1,7-bisphosphate + H2O = D-sedoheptulose 7-phosphate + phosphate. Functionally, sedoheptulose 1,7-bisphosphatase involved in riboneogenesis. Dephosphorylates sedoheptulose 1,7-bisphosphate (SBP), which is converted via the non-oxidative pentose phosphate pathway to ribose-5-phosphate. Has a fructose 1,6-bisphosphatase activity in vitro, but this is probably not biologically relevant, since deletion does not affect fructose 1,6-biphosphate (FBP) levels. The polypeptide is Sedoheptulose 1,7-bisphosphatase (SHB17) (Saccharomyces cerevisiae (strain ATCC 204508 / S288c) (Baker's yeast)).